Here is a 129-residue protein sequence, read N- to C-terminus: Small ribosomal subunit protein uS11 (129 aa).

It belongs to the universal ribosomal protein uS11 family. As to quaternary structure, part of the 30S ribosomal subunit. Interacts with proteins S7 and S18. Binds to IF-3.

In terms of biological role, located on the platform of the 30S subunit, it bridges several disparate RNA helices of the 16S rRNA. Forms part of the Shine-Dalgarno cleft in the 70S ribosome. The protein is Small ribosomal subunit protein uS11 of Tolumonas auensis (strain DSM 9187 / NBRC 110442 / TA 4).